The primary structure comprises 293 residues: N-acetylmannosamine kinase (293 aa).

ATP contacts are provided by residues 5-12 (AIDIGGTK) and 133-140 (GVGGGLVI). Zn(2+) is bound by residues His-157, Cys-167, Cys-169, and Cys-174.

The protein belongs to the ROK (NagC/XylR) family. NanK subfamily. In terms of assembly, homodimer.

It carries out the reaction an N-acyl-D-mannosamine + ATP = an N-acyl-D-mannosamine 6-phosphate + ADP + H(+). It participates in amino-sugar metabolism; N-acetylneuraminate degradation; D-fructose 6-phosphate from N-acetylneuraminate: step 2/5. Its function is as follows. Catalyzes the phosphorylation of N-acetylmannosamine (ManNAc) to ManNAc-6-P. The polypeptide is N-acetylmannosamine kinase (Vibrio vulnificus (strain CMCP6)).